Here is a 243-residue protein sequence, read N- to C-terminus: Pleckstrin homology domain-containing family B member 1 (243 aa).

The 108-residue stretch at 21–128 folds into the PH domain; that stretch reads ALVRGGWLWR…WKTALLEANS (108 aa).

In terms of assembly, homodimer. Interacts (via PH domain) with MYO1C. Interacts (via PH domain) with MYO7A. Binds transducins. Highly expressed in retina and brain. Levels are very low or not detectable in all other tissues tested.

Its subcellular location is the membrane. It localises to the cytoplasm. This is Pleckstrin homology domain-containing family B member 1 (PLEKHB1) from Homo sapiens (Human).